A 249-amino-acid polypeptide reads, in one-letter code: 23S rRNA (guanosine-2'-O-)-methyltransferase RlmB (249 aa).

S-adenosyl-L-methionine is bound by residues Gly-197, Ile-217, and Leu-226.

The protein belongs to the class IV-like SAM-binding methyltransferase superfamily. RNA methyltransferase TrmH family. RlmB subfamily.

It localises to the cytoplasm. It carries out the reaction guanosine(2251) in 23S rRNA + S-adenosyl-L-methionine = 2'-O-methylguanosine(2251) in 23S rRNA + S-adenosyl-L-homocysteine + H(+). Functionally, specifically methylates the ribose of guanosine 2251 in 23S rRNA. This is 23S rRNA (guanosine-2'-O-)-methyltransferase RlmB from Ralstonia nicotianae (strain ATCC BAA-1114 / GMI1000) (Ralstonia solanacearum).